We begin with the raw amino-acid sequence, 1482 residues long: Chromosome partition protein MukB (1482 aa).

34–41 (GGNGAGKS) contributes to the ATP binding site. Coiled-coil stretches lie at residues 337-418 (LNLV…QYQQ), 444-472 (LDTY…QTAH), 509-601 (RHLA…TSHA), 781-805 (AARE…ATLS), 835-1116 (EAEI…AKAG), and 1210-1265 (EAIE…LQSV). Residues 666–783 (PGGAEDARLN…SVPLFGRAAR (118 aa)) form a flexible hinge region. The disordered stretch occupies residues 1049–1077 (ADAGAEERARQRRDELHTRLSNNRSRRNQ). A compositionally biased stretch (basic and acidic residues) spans 1051-1066 (AGAEERARQRRDELHT).

Belongs to the SMC family. MukB subfamily. As to quaternary structure, homodimerization via its hinge domain. Binds to DNA via its C-terminal region. Interacts, and probably forms a ternary complex, with MukE and MukF via its C-terminal region. The complex formation is stimulated by calcium or magnesium. Interacts with tubulin-related protein FtsZ.

Its subcellular location is the cytoplasm. The protein localises to the nucleoid. Plays a central role in chromosome condensation, segregation and cell cycle progression. Functions as a homodimer, which is essential for chromosome partition. Involved in negative DNA supercoiling in vivo, and by this means organize and compact chromosomes. May achieve or facilitate chromosome segregation by condensation DNA from both sides of a centrally located replisome during cell division. This is Chromosome partition protein MukB from Cronobacter sakazakii (strain ATCC BAA-894) (Enterobacter sakazakii).